Reading from the N-terminus, the 201-residue chain is Sorting nexin-10 (201 aa).

Residues 8–125 are required for interaction with ATP6V1D; the sequence is EEFVSVWVRD…SLHLFLQSHL (118 aa). Residues 10–127 form the PX domain; it reads FVSVWVRDPR…HLFLQSHLNS (118 aa). The a 1,2-diacyl-sn-glycero-3-phospho-(1D-myo-inositol-3-phosphate) site is built by R53, K79, and R94. Positions 155–201 are disordered; sequence RFPEEEEEGKKDADVEYDSESSSSGLGHSSDDSSSHGCKTSPALQES.

Belongs to the sorting nexin family. As to quaternary structure, interacts with ATP6V1D; may play a role in ciliogenesis. As to expression, expressed in femur, calvariae and teeth.

The protein resides in the cytoplasm. It is found in the endosome membrane. Its subcellular location is the cytoskeleton. It localises to the microtubule organizing center. The protein localises to the centrosome. In terms of biological role, probable phosphoinositide-binding protein involved in protein sorting and membrane trafficking in endosomes. Plays a role in cilium biogenesis through regulation of the transport and the localization of proteins to the cilium. Required for the localization to the cilium of V-ATPase subunit ATP6V1D and ATP6V0D1, and RAB8A. Involved in osteoclast differentiation and therefore bone resorption. The sequence is that of Sorting nexin-10 (Snx10) from Mus musculus (Mouse).